A 129-amino-acid polypeptide reads, in one-letter code: Large ribosomal subunit protein uL22 (129 aa).

This sequence belongs to the universal ribosomal protein uL22 family. In terms of assembly, part of the 50S ribosomal subunit.

Functionally, this protein binds specifically to 23S rRNA; its binding is stimulated by other ribosomal proteins, e.g. L4, L17, and L20. It is important during the early stages of 50S assembly. It makes multiple contacts with different domains of the 23S rRNA in the assembled 50S subunit and ribosome. The globular domain of the protein is located near the polypeptide exit tunnel on the outside of the subunit, while an extended beta-hairpin is found that lines the wall of the exit tunnel in the center of the 70S ribosome. In Bartonella quintana (strain Toulouse) (Rochalimaea quintana), this protein is Large ribosomal subunit protein uL22.